Here is a 208-residue protein sequence, read N- to C-terminus: Thymidylate kinase (208 aa).

11-18 (GTEGVGKT) contributes to the ATP binding site.

The protein belongs to the thymidylate kinase family.

The catalysed reaction is dTMP + ATP = dTDP + ADP. Phosphorylation of dTMP to form dTDP in both de novo and salvage pathways of dTTP synthesis. This chain is Thymidylate kinase, found in Psychrobacter sp. (strain PRwf-1).